The following is a 435-amino-acid chain: Nuclear hormone receptor family member nhr-14 (435 aa).

Residues 17-92 (ADFCVVCGDK…DGMKPEAIQN (76 aa)) constitute a DNA-binding region (nuclear receptor). 2 consecutive NR C4-type zinc fingers follow at residues 20–40 (CVVCGDKAIGKHYGAVACNGC) and 56–80 (CRFNKQCNIDKDHRNACRYCRFQKC). The disordered stretch occupies residues 91-126 (QNERDRIGSTKRRKRSGANSENNSDSEGTPSPKIEV). The span at 107–119 (GANSENNSDSEGT) shows a compositional bias: polar residues. The NR LBD domain occupies 131–355 (VSRKLIEMLL…KRDTISPKIE (225 aa)).

This sequence belongs to the nuclear hormone receptor family. Expressed in intestine and head neurons in young adults.

It is found in the nucleus. Orphan nuclear receptor. Transcriptional repressor of intestinal metal transporter smf-3 and genes of the innate immune response. Inhibits nuclear localization of transcription factor pqm-1; in response to pathogen stress, may facilitate translocation of pqm-1, leading to transcriptional activation of genes involved in innate immunity and iron uptake. The sequence is that of Nuclear hormone receptor family member nhr-14 (nhr-14) from Caenorhabditis elegans.